Here is a 212-residue protein sequence, read N- to C-terminus: Large ribosomal subunit protein uL3 (212 aa).

Residues 136-155 (THGNSLSHRSNGSIGQNQTP) are compositionally biased toward polar residues. The disordered stretch occupies residues 136 to 157 (THGNSLSHRSNGSIGQNQTPGR). An N5-methylglutamine modification is found at Gln153.

This sequence belongs to the universal ribosomal protein uL3 family. As to quaternary structure, part of the 50S ribosomal subunit. Forms a cluster with proteins L14 and L19. Post-translationally, methylated by PrmB.

Functionally, one of the primary rRNA binding proteins, it binds directly near the 3'-end of the 23S rRNA, where it nucleates assembly of the 50S subunit. This chain is Large ribosomal subunit protein uL3, found in Shewanella putrefaciens (strain CN-32 / ATCC BAA-453).